A 348-amino-acid polypeptide reads, in one-letter code: Anthranilate phosphoribosyltransferase (348 aa).

Residues Gly-87, 90–91 (GD), Thr-95, 97–100 (NIST), 115–123 (KHGNRSASG), and Ser-127 contribute to the 5-phospho-alpha-D-ribose 1-diphosphate site. Gly-87 contacts anthranilate. Ser-99 contacts Mg(2+). Residue Asn-118 coordinates anthranilate. Arg-173 lines the anthranilate pocket. Mg(2+) is bound by residues Asp-232 and Glu-233.

Belongs to the anthranilate phosphoribosyltransferase family. Homodimer. Mg(2+) serves as cofactor.

It catalyses the reaction N-(5-phospho-beta-D-ribosyl)anthranilate + diphosphate = 5-phospho-alpha-D-ribose 1-diphosphate + anthranilate. It functions in the pathway amino-acid biosynthesis; L-tryptophan biosynthesis; L-tryptophan from chorismate: step 2/5. Its function is as follows. Catalyzes the transfer of the phosphoribosyl group of 5-phosphorylribose-1-pyrophosphate (PRPP) to anthranilate to yield N-(5'-phosphoribosyl)-anthranilate (PRA). The sequence is that of Anthranilate phosphoribosyltransferase from Synechococcus sp. (strain WH7803).